A 92-amino-acid chain; its full sequence is DNA/RNA-binding protein Alba (92 aa).

Position 11 is an N6-acetyllysine (Lys-11).

Belongs to the histone-like Alba family. Post-translationally, acetylated. Acetylation at Lys-11 decreases DNA-binding affinity.

It is found in the cytoplasm. The protein resides in the chromosome. Functionally, binds double-stranded DNA tightly but without sequence specificity. Involved in DNA compaction. The sequence is that of DNA/RNA-binding protein Alba from Pyrobaculum neutrophilum (strain DSM 2338 / JCM 9278 / NBRC 100436 / V24Sta) (Thermoproteus neutrophilus).